We begin with the raw amino-acid sequence, 51 residues long: Large ribosomal subunit protein eL39z/eL39x (51 aa).

The interval 1 to 21 is disordered; the sequence is MPSHKSFMIKKKLGKKMRQNR. Positions 7-19 are enriched in basic residues; the sequence is FMIKKKLGKKMRQ.

This sequence belongs to the eukaryotic ribosomal protein eL39 family.

This chain is Large ribosomal subunit protein eL39z/eL39x (RPL39A), found in Arabidopsis thaliana (Mouse-ear cress).